Consider the following 263-residue polypeptide: Acyl-[acyl-carrier-protein]--UDP-N-acetylglucosamine O-acyltransferase (263 aa).

Belongs to the transferase hexapeptide repeat family. LpxA subfamily. Homotrimer.

It localises to the cytoplasm. It catalyses the reaction a (3R)-hydroxyacyl-[ACP] + UDP-N-acetyl-alpha-D-glucosamine = a UDP-3-O-[(3R)-3-hydroxyacyl]-N-acetyl-alpha-D-glucosamine + holo-[ACP]. Its pathway is glycolipid biosynthesis; lipid IV(A) biosynthesis; lipid IV(A) from (3R)-3-hydroxytetradecanoyl-[acyl-carrier-protein] and UDP-N-acetyl-alpha-D-glucosamine: step 1/6. Involved in the biosynthesis of lipid A, a phosphorylated glycolipid that anchors the lipopolysaccharide to the outer membrane of the cell. This chain is Acyl-[acyl-carrier-protein]--UDP-N-acetylglucosamine O-acyltransferase, found in Tolumonas auensis (strain DSM 9187 / NBRC 110442 / TA 4).